The primary structure comprises 44 residues: Thioredoxin (44 aa).

The Thioredoxin domain maps to 2–44 (IELDKSNFEEEVLKAEGTVLVDFWSPSCEPCKALMPHVHDFEE). Cys-29 and Cys-32 are disulfide-bonded.

This sequence belongs to the thioredoxin family.

Its function is as follows. Participates in various redox reactions through the reversible oxidation of its active center dithiol to a disulfide and catalyzes dithiol-disulfide exchange reactions. The sequence is that of Thioredoxin (trxA) from Tissierella creatinophila.